The sequence spans 247 residues: Fibroblast growth factor 14 (247 aa).

Disordered regions lie at residues 1-37 (MAAA…SKNR) and 216-247 (ETVP…CKTT). Residues 15–25 (QAREQHWDRPS) are compositionally biased toward basic and acidic residues.

The protein belongs to the heparin-binding growth factors family. As to quaternary structure, interacts with SCN8A. As to expression, brain and testis; widely distributed in the developing nervous system. In adult, high levels in the granular layer of the cerebellum, less in hippocampus and olfactory bulb.

The protein resides in the nucleus. In terms of biological role, probably involved in nervous system development and function. The sequence is that of Fibroblast growth factor 14 (Fgf14) from Mus musculus (Mouse).